We begin with the raw amino-acid sequence, 606 residues long: Glutamine--fructose-6-phosphate aminotransferase [isomerizing] (606 aa).

Cys-2 functions as the Nucleophile; for GATase activity in the catalytic mechanism. One can recognise a Glutamine amidotransferase type-2 domain in the interval 2 to 217; it reads CGIVGMVGEN…DGDVMVLRKD (216 aa). 2 SIS domains span residues 284 to 423 and 455 to 596; these read YEEL…INGY and LSEK…PDKP. Lys-601 functions as the For Fru-6P isomerization activity in the catalytic mechanism.

As to quaternary structure, homodimer.

It is found in the cytoplasm. It carries out the reaction D-fructose 6-phosphate + L-glutamine = D-glucosamine 6-phosphate + L-glutamate. Catalyzes the first step in hexosamine metabolism, converting fructose-6P into glucosamine-6P using glutamine as a nitrogen source. This chain is Glutamine--fructose-6-phosphate aminotransferase [isomerizing], found in Thermotoga maritima (strain ATCC 43589 / DSM 3109 / JCM 10099 / NBRC 100826 / MSB8).